Consider the following 628-residue polypeptide: Patulin synthase (628 aa).

The signal sequence occupies residues 1–19 (MRLTSGIFHAAIAVAAVGA). A glycan (N-linked (GlcNAc...) asparagine) is linked at Asn-49. FAD is bound by residues 61-62 (TA) and 82-83 (EA). N-linked (GlcNAc...) asparagine glycosylation is present at Asn-93. 148–151 (NYMA) lines the FAD pocket. 6 N-linked (GlcNAc...) asparagine glycosylation sites follow: Asn-198, Asn-261, Asn-283, Asn-429, Asn-486, and Asn-526. His-564 serves as the catalytic Proton acceptor. Asn-575 is a glycosylation site (N-linked (GlcNAc...) asparagine). FAD-binding positions include Ala-598 and 609–610 (PQ).

This sequence belongs to the GMC oxidoreductase family. FAD is required as a cofactor.

It is found in the cytoplasm. The protein localises to the cell cortex. Its subcellular location is the vacuole. The protein resides in the secreted. It localises to the cell wall. The catalysed reaction is (E)-ascladiol + A = patulin + AH2. The protein operates within mycotoxin biosynthesis; patulin biosynthesis. Patulin synthase; part of the gene cluster that mediates the biosynthesis of patulin, an acetate-derived tetraketide mycotoxin produced by several fungal species that shows antimicrobial properties against several bacteria. PatE catalyzes the last step of the pathway which is the conversion of E-ascladiol to patulin. The pathway begins with the synthesis of 6-methylsalicylic acid by the polyketide synthase (PKS) patK via condensation of acetate and malonate units. The 6-methylsalicylic acid decarboxylase patG then catalyzes the decarboxylation of 6-methylsalicylic acid to yield m-cresol (also known as 3-methylphenol). These first reactions occur in the cytosol. The intermediate m-cresol is then transported into the endoplasmic reticulum where the cytochrome P450 monooxygenase patH converts it to m-hydroxybenzyl alcohol, which is further converted to gentisyl alcohol by the cytochrome P450 monooxygenase patI. The oxidoreductases patJ and patO further convert gentisyl alcohol to isoepoxydon in the vacuole. PatN catalyzes then the transformation of isoepoxydon into phyllostine. The cluster protein patF is responsible for the conversion from phyllostine to neopatulin whereas the alcohol dehydrogenase patD converts neopatulin to E-ascladiol. The steps between isoepoxydon and E-ascladiol occur in the cytosol, and E-ascladiol is probably secreted to the extracellular space by one of the cluster-specific transporters patC or patM. Finally, the secreted patulin synthase patE catalyzes the conversion of E-ascladiol to patulin. In Penicillium expansum (Blue mold rot fungus), this protein is Patulin synthase.